Reading from the N-terminus, the 233-residue chain is 7-cyano-7-deazaguanine synthase (233 aa).

Position 7-17 (7-17 (CSGGLDSVSLA)) interacts with ATP. Cys-185, Cys-193, Cys-196, and Cys-199 together coordinate Zn(2+).

It belongs to the QueC family. Requires Zn(2+) as cofactor.

The catalysed reaction is 7-carboxy-7-deazaguanine + NH4(+) + ATP = 7-cyano-7-deazaguanine + ADP + phosphate + H2O + H(+). It functions in the pathway purine metabolism; 7-cyano-7-deazaguanine biosynthesis. Its function is as follows. Catalyzes the ATP-dependent conversion of 7-carboxy-7-deazaguanine (CDG) to 7-cyano-7-deazaguanine (preQ(0)). The chain is 7-cyano-7-deazaguanine synthase from Ruegeria sp. (strain TM1040) (Silicibacter sp.).